The chain runs to 126 residues: Copper resistance protein C (126 aa).

The N-terminal stretch at 1 to 23 is a signal peptide; it reads MSILNKAILTGGLVMGVAFSAMA. A Cu(2+)-binding site is contributed by H24. Cu(+)-binding residues include M63, M66, M69, H72, and M75. H115 is a Cu(2+) binding site.

This sequence belongs to the CopC family. As to quaternary structure, monomer-dimer equilibrium in solution for the apo protein. Dimerization is significantly enhanced upon binding of copper(I).

It localises to the periplasm. In terms of biological role, copper-binding protein involved in copper resistance. The chain is Copper resistance protein C from Escherichia coli.